A 139-amino-acid polypeptide reads, in one-letter code: Aspartate 1-decarboxylase (139 aa).

Catalysis depends on Ser-25, which acts as the Schiff-base intermediate with substrate; via pyruvic acid. Residue Ser-25 is modified to Pyruvic acid (Ser). Substrate is bound at residue Thr-57. Residue Tyr-58 is the Proton donor of the active site. 73 to 75 (GAA) serves as a coordination point for substrate. The tract at residues 117–139 (TGSDPADAPAGSGLLRGDRPAGR) is disordered.

It belongs to the PanD family. Heterooctamer of four alpha and four beta subunits. Requires pyruvate as cofactor. Is synthesized initially as an inactive proenzyme, which is activated by self-cleavage at a specific serine bond to produce a beta-subunit with a hydroxyl group at its C-terminus and an alpha-subunit with a pyruvoyl group at its N-terminus.

Its subcellular location is the cytoplasm. It carries out the reaction L-aspartate + H(+) = beta-alanine + CO2. Its pathway is cofactor biosynthesis; (R)-pantothenate biosynthesis; beta-alanine from L-aspartate: step 1/1. Catalyzes the pyruvoyl-dependent decarboxylation of aspartate to produce beta-alanine. In Nocardioides sp. (strain ATCC BAA-499 / JS614), this protein is Aspartate 1-decarboxylase.